Consider the following 251-residue polypeptide: Small ribosomal subunit protein uS2B (251 aa).

Residue S2 is modified to N-acetylserine. Residues 214–225 (AVEEASATGATE) show a composition bias toward low complexity. The segment at 214–251 (AVEEASATGATEEATEEATEETTEATEWAEDNTENATW) is disordered. Positions 226-251 (EATEEATEETTEATEWAEDNTENATW) are enriched in acidic residues.

It belongs to the universal ribosomal protein uS2 family. In terms of assembly, component of the small ribosomal subunit. Mature ribosomes consist of a small (40S) and a large (60S) subunit. The 40S subunit contains about 33 different proteins and 1 molecule of RNA (18S). The 60S subunit contains about 49 different proteins and 3 molecules of RNA (25S, 5.8S and 5S). Interacts with RPS21.

It localises to the cytoplasm. Its function is as follows. Required for the assembly and/or stability of the 40S ribosomal subunit. Required for the processing of the 20S rRNA-precursor to mature 18S rRNA in a late step of the maturation of 40S ribosomal subunits. This is Small ribosomal subunit protein uS2B from Vanderwaltozyma polyspora (strain ATCC 22028 / DSM 70294 / BCRC 21397 / CBS 2163 / NBRC 10782 / NRRL Y-8283 / UCD 57-17) (Kluyveromyces polysporus).